Here is a 673-residue protein sequence, read N- to C-terminus: Translation factor GUF1 homolog, mitochondrial (673 aa).

Positions 68-260 constitute a tr-type G domain; the sequence is ERIRNFSIIA…AVIERIPSPP (193 aa). GTP is bound by residues 77–84, 153–157, and 207–210; these read AHVDHGKS, DTPGH, and NKID.

The protein belongs to the TRAFAC class translation factor GTPase superfamily. Classic translation factor GTPase family. LepA subfamily.

It localises to the mitochondrion inner membrane. The enzyme catalyses GTP + H2O = GDP + phosphate + H(+). Its function is as follows. Promotes mitochondrial protein synthesis. May act as a fidelity factor of the translation reaction, by catalyzing a one-codon backward translocation of tRNAs on improperly translocated ribosomes. Binds to mitochondrial ribosomes in a GTP-dependent manner. This is Translation factor GUF1 homolog, mitochondrial from Ricinus communis (Castor bean).